The following is a 430-amino-acid chain: Adenylosuccinate synthetase (430 aa).

Residues 12-18 and 40-42 contribute to the GTP site; these read GDEGKGK and GHT. Asp13 functions as the Proton acceptor in the catalytic mechanism. Asp13 and Gly40 together coordinate Mg(2+). IMP is bound by residues 13 to 16, 38 to 41, Thr128, Arg142, Gln223, Thr238, and Arg302; these read DEGK and NAGH. The Proton donor role is filled by His41. 298–304 provides a ligand contact to substrate; it reads TTTGRPR. GTP contacts are provided by residues Arg304, 330–332, and 412–414; these read SID and SVG.

The protein belongs to the adenylosuccinate synthetase family. In terms of assembly, homodimer. Mg(2+) is required as a cofactor.

It localises to the cytoplasm. The catalysed reaction is IMP + L-aspartate + GTP = N(6)-(1,2-dicarboxyethyl)-AMP + GDP + phosphate + 2 H(+). The protein operates within purine metabolism; AMP biosynthesis via de novo pathway; AMP from IMP: step 1/2. Functionally, plays an important role in the de novo pathway of purine nucleotide biosynthesis. Catalyzes the first committed step in the biosynthesis of AMP from IMP. The chain is Adenylosuccinate synthetase from Streptococcus equi subsp. equi (strain 4047).